The chain runs to 35 residues: Photosystem II reaction center protein T (35 aa).

A helical membrane pass occupies residues 3–23 (SVAYILIFTLCIGTIFFAIAF).

This sequence belongs to the PsbT family. In terms of assembly, PSII is composed of 1 copy each of membrane proteins PsbA, PsbB, PsbC, PsbD, PsbE, PsbF, PsbH, PsbI, PsbJ, PsbK, PsbL, PsbM, PsbT, PsbX, PsbY, PsbZ, Psb30/Ycf12, peripheral proteins PsbO, CyanoQ (PsbQ), PsbU, PsbV and a large number of cofactors. It forms dimeric complexes.

It localises to the cellular thylakoid membrane. In terms of biological role, found at the monomer-monomer interface of the photosystem II (PS II) dimer, plays a role in assembly and dimerization of PSII. PSII is a light-driven water plastoquinone oxidoreductase, using light energy to abstract electrons from H(2)O, generating a proton gradient subsequently used for ATP formation. This Nostoc punctiforme (strain ATCC 29133 / PCC 73102) protein is Photosystem II reaction center protein T.